A 493-amino-acid chain; its full sequence is Amphoterin-induced protein 1 (493 aa).

The first 27 residues, 1-27 (MQPQRDLRGLWLLLLSLFLLLFEVARA), serve as a signal peptide directing secretion. The 34-residue stretch at 28 to 61 (GRPVVSCPANCLCASNILSCSKQQLPNVPQSLPG) folds into the LRRNT domain. At 28–372 (GRPVVSCPAN…LHGHHDTLNT (345 aa)) the chain is on the extracellular side. Intrachain disulfides connect Cys-34-Cys-40 and Cys-38-Cys-47. LRR repeat units follow at residues 62 to 83 (YTAL…WTPT), 87 to 108 (NLHS…AFVP), 111 to 132 (NLRY…LFSG), 135 to 156 (ALEV…AFED), 159 to 179 (QLQK…ELIK), and 186 to 206 (KLTL…TDLQ). Residue Asn-72 is glycosylated (N-linked (GlcNAc...) asparagine). The LRRCT domain maps to 221-272 (NPLECDCKLYQLFSHWQYRQLSSVMDFQEDLYCVHSKKLHNVFSLDFFNCSE). Cystine bridges form between Cys-225/Cys-253, Cys-227/Cys-270, and Cys-290/Cys-341. Asn-269, Asn-315, Asn-349, and Asn-360 each carry an N-linked (GlcNAc...) asparagine glycan. Positions 269 to 353 (NCSEYKESAW…MGETFNETLS (85 aa)) constitute an Ig-like C2-type domain. A helical membrane pass occupies residues 373–393 (AYTTLVGCILSVVLVLIYLYL). The Cytoplasmic segment spans residues 394–493 (TPCRCWCRGV…SVFSDTPIVV (100 aa)). The tract at residues 405–493 (KPSSHQGDSL…SVFSDTPIVV (89 aa)) is disordered. Over residues 408-424 (SHQGDSLSSSMLSTTPN) the composition is skewed to polar residues. Over residues 431–442 (GDKDDGFDRRVA) the composition is skewed to basic and acidic residues. A phosphoserine mark is found at Ser-477 and Ser-481.

The protein belongs to the immunoglobulin superfamily. AMIGO family. In terms of assembly, homodimer, and heterodimer with AMIGO2 and AMIGO3. Interacts with KCNB1.

The protein localises to the cell membrane. It localises to the perikaryon. The protein resides in the cell projection. It is found in the dendrite. Its subcellular location is the axon. In terms of biological role, promotes growth and fasciculation of neurites from cultured hippocampal neurons. May be involved in fasciculation as well as myelination of developing neural axons. May have a role in regeneration as well as neural plasticity in the adult nervous system. May mediate homophilic as well as heterophilic cell-cell interaction and contribute to signal transduction through its intracellular domain. Assembled with KCNB1 modulates the gating characteristics of the delayed rectifier voltage-dependent potassium channel KCNB1. The chain is Amphoterin-induced protein 1 from Rattus norvegicus (Rat).